The chain runs to 396 residues: Cell division protein DivIB (396 aa).

2 disordered regions span residues 1–23 (MSKD…SEWQ) and 37–116 (EVAL…ATKE). Residues 1–130 (MSKDKKNEDK…AKIPGIHILR (130 aa)) lie on the Cytoplasmic side of the membrane. Basic and acidic residues-rich tracts occupy residues 37-65 (EVAL…KQDQ) and 75-116 (ESAK…ATKE). A helical transmembrane segment spans residues 131–151 (AFTILFPSLLLLIVSAYLLSP). Over 152–396 (YATMKDIRVE…NQTNQRSSRR (245 aa)) the chain is Extracellular. The POTRA domain maps to 153–223 (ATMKDIRVEG…TKFTIKVKEY (71 aa)). Positions 361–385 (KAKQEAKEAEKKQEEEQKKQEEESN) are enriched in basic and acidic residues. The disordered stretch occupies residues 361–396 (KAKQEAKEAEKKQEEEQKKQEEESNRNQTNQRSSRR). The span at 386 to 396 (RNQTNQRSSRR) shows a compositional bias: low complexity.

It belongs to the FtsQ/DivIB family. DivIB subfamily.

It localises to the cell membrane. Functionally, cell division protein that may be involved in stabilizing or promoting the assembly of the division complex. The polypeptide is Cell division protein DivIB (Streptococcus pneumoniae (strain ATCC BAA-255 / R6)).